Consider the following 123-residue polypeptide: MAKETNLVRRVSVKAANKNIQSFNSGDTVNVFVKVKEGEKERVQLYKGIVTKIQGSGAAKSFTVRKMSAGVGVERTFPFASPALDKVEIVNVGKVRRSKLYYLRALKGKAAKIESELVSSKAE.

The protein belongs to the bacterial ribosomal protein bL19 family.

Functionally, this protein is located at the 30S-50S ribosomal subunit interface and may play a role in the structure and function of the aminoacyl-tRNA binding site. In Bdellovibrio bacteriovorus (strain ATCC 15356 / DSM 50701 / NCIMB 9529 / HD100), this protein is Large ribosomal subunit protein bL19.